Here is a 406-residue protein sequence, read N- to C-terminus: Arginine biosynthesis bifunctional protein ArgJ (406 aa).

Residues Thr152, Lys179, Thr190, Glu277, Asn401, and Ser406 each contribute to the substrate site. Catalysis depends on Thr190, which acts as the Nucleophile.

This sequence belongs to the ArgJ family. In terms of assembly, heterotetramer of two alpha and two beta chains.

It localises to the cytoplasm. The enzyme catalyses N(2)-acetyl-L-ornithine + L-glutamate = N-acetyl-L-glutamate + L-ornithine. It catalyses the reaction L-glutamate + acetyl-CoA = N-acetyl-L-glutamate + CoA + H(+). It participates in amino-acid biosynthesis; L-arginine biosynthesis; L-ornithine and N-acetyl-L-glutamate from L-glutamate and N(2)-acetyl-L-ornithine (cyclic): step 1/1. Its pathway is amino-acid biosynthesis; L-arginine biosynthesis; N(2)-acetyl-L-ornithine from L-glutamate: step 1/4. Its function is as follows. Catalyzes two activities which are involved in the cyclic version of arginine biosynthesis: the synthesis of N-acetylglutamate from glutamate and acetyl-CoA as the acetyl donor, and of ornithine by transacetylation between N(2)-acetylornithine and glutamate. This chain is Arginine biosynthesis bifunctional protein ArgJ, found in Neisseria gonorrhoeae.